A 560-amino-acid polypeptide reads, in one-letter code: Protein tweety homolog 3 (560 aa).

Residues 1–43 (MAAVVNYSPPWWVNLFHRLPHFNLQFQQTSSDFRPDDSDYQKA) lie on the Extracellular side of the membrane. The helical transmembrane segment at 44–64 (VLLLGAAALVCLALDLLFLLF) threads the bilayer. Residues 65–87 (YSFWLCCCRRKNHDSPNADCCCT) are Cytoplasmic-facing. A helical transmembrane segment spans residues 88 to 108 (AWCVIIATLVCSAGIAVGFYG). The Extracellular portion of the chain corresponds to 109–212 (NGETCDGVTR…TEQYDWYRWL (104 aa)). Residues Glu111 and Asp114 each contribute to the Ca(2+) site. Residues Asn127 and Asn145 are each glycosylated (N-linked (GlcNAc...) asparagine). The chain crosses the membrane as a helical span at residues 213 to 233 (GYLGLLLFDVIICLLVLVGLI). Residues 234–238 (RNSRS) are Cytoplasmic-facing. A helical transmembrane segment spans residues 239-259 (ILIGVCFLGVLTLVISWASLG). Topologically, residues 260 to 387 (LEFSFAVGAS…LTGLCYDGVE (128 aa)) are extracellular. Intrachain disulfides connect Cys272/Cys382 and Cys300/Cys367. N-linked (GlcNAc...) asparagine glycosylation occurs at Asn352. Residues 388-408 (GLIYLVLFSFVTALMFSSIVC) traverse the membrane as a helical segment. Residues 409 to 560 (SVPHTWQSKR…AIHRPHSAIH (152 aa)) are Cytoplasmic-facing. 2 disordered regions span residues 415–435 (QSKR…GSRA) and 486–560 (TPRC…SAIH). The span at 539–549 (TSRSAPNSRPN) shows a compositional bias: polar residues.

This sequence belongs to the tweety family. Homotetramer; disulfide-linked. Forms cis-homodimers in the presence of Ca(2+).

It localises to the cell membrane. The catalysed reaction is chloride(in) = chloride(out). The enzyme catalyses L-glutamate(out) = L-glutamate(in). Its function is as follows. May act as a calcium-independent, swelling-dependent volume-regulated anion channel (VRAC-swell) which plays a pivotal role in the process of regulatory volume decrease (RVD) in the brain through the efflux of anions like chloride and organic osmolytes like glutamate. Probable large-conductance Ca(2+)-activated chloride channel. In Danio rerio (Zebrafish), this protein is Protein tweety homolog 3 (ttyh3b).